Reading from the N-terminus, the 371-residue chain is Probable protein phosphatase 2C 11 (371 aa).

A helical membrane pass occupies residues 29 to 49 (FFFFLFNSQTISSFIIFYLFL). Residues 67–95 (PPLSVAPLRGDANSPPPESSSSPATKSSL) form a disordered region. A compositionally biased stretch (low complexity) spans 85 to 94 (SSSSPATKSS). Residues 123 to 368 (SYGYSSLKGK…DNITCIVVRF (246 aa)) enclose the PPM-type phosphatase domain. Residues D159, G160, D320, and D359 each contribute to the Mn(2+) site.

This sequence belongs to the PP2C family. Mg(2+) serves as cofactor. Requires Mn(2+) as cofactor.

The protein localises to the membrane. The enzyme catalyses O-phospho-L-seryl-[protein] + H2O = L-seryl-[protein] + phosphate. It catalyses the reaction O-phospho-L-threonyl-[protein] + H2O = L-threonyl-[protein] + phosphate. This Arabidopsis thaliana (Mouse-ear cress) protein is Probable protein phosphatase 2C 11.